A 1154-amino-acid polypeptide reads, in one-letter code: DNA-directed RNA polymerase, mitochondrial (1154 aa).

Residues 1–30 constitute a mitochondrion transit peptide; it reads MLRRKIQTYLSRSHIRRGLCGLRFFQTQRL. The segment at 221–243 is disordered; the sequence is ESENGKDQNGDSSLKEKQPDVET. Residues 223–240 show a composition bias toward basic and acidic residues; that stretch reads ENGKDQNGDSSLKEKQPD. Active-site residues include D821, K890, and D1061.

The protein belongs to the phage and mitochondrial RNA polymerase family.

It is found in the mitochondrion. It carries out the reaction RNA(n) + a ribonucleoside 5'-triphosphate = RNA(n+1) + diphosphate. In terms of biological role, DNA-dependent RNA polymerase catalyzes the transcription of DNA into RNA using the four ribonucleoside triphosphates as substrates. Combines in the mitochondrion with mitochondrial transcription factor mtf1 as a holoenzyme to recognize and initiate transcription at the core mitochondrial promoters. The protein is DNA-directed RNA polymerase, mitochondrial (rpo41) of Schizosaccharomyces pombe (strain 972 / ATCC 24843) (Fission yeast).